Consider the following 1885-residue polypeptide: Chitin synthase 5 (1885 aa).

The 789-residue stretch at 1–789 (MATRGNVPAH…SIALTGSQAA (789 aa)) folds into the Myosin motor domain. 99-106 (GESGSGKT) provides a ligand contact to ATP. Residues Asn219 and Asn429 are each glycosylated (N-linked (GlcNAc...) asparagine). The interval 601–649 (KPLRMPSVSRKKHDQLRRMASRRADRSPAPQEEEPLPGTEEAKVRRTKP) is disordered. The span at 609–621 (SRKKHDQLRRMAS) shows a compositional bias: basic residues. The tract at residues 666-690 (LDNITKSLTAPNVNNYFVFCLKPND) is actin-binding. A glycan (N-linked (GlcNAc...) asparagine) is linked at Asn668. The tract at residues 794 to 817 (GDIGSPSRPDTPGHNPFSDSKARL) is disordered. Helical transmembrane passes span 894–914 (WLAI…KWIG) and 929–949 (FAIN…IIVF). The 60-residue stretch at 957 to 1016 (QNVYSAAELSAHDGKGKHSAYVAIRGQVFDLGAFMPNHYPKIIPQSSLKKYAGVDATGLF) folds into the Cytochrome b5 heme-binding domain. 2 N-linked (GlcNAc...) asparagine glycosylation sites follow: Asn1043 and Asn1068. Residues 1205-1225 (ILLAVSILLCSVIGFKFFAAL) form a helical membrane-spanning segment. N-linked (GlcNAc...) asparagine glycans are attached at residues Asn1462 and Asn1568. Transmembrane regions (helical) follow at residues 1599 to 1619 (LLST…IVLL), 1626 to 1646 (VPLT…IIFI), and 1653 to 1673 (MIGW…GLPL). N-linked (GlcNAc...) asparagine glycans are attached at residues Asn1759 and Asn1790. The region spanning 1827-1882 (LPTDDMLLNEIRDILRTADLMTVTKKGIKQELERRFNVNLDMKRAYIGSATEAILS) is the DEK-C domain.

This sequence in the N-terminal section; belongs to the TRAFAC class myosin-kinesin ATPase superfamily. Myosin family. In the C-terminal section; belongs to the chitin synthase family. Class V subfamily. In terms of processing, maximal activity requires trypsin activation, suggesting a zymogenic nature.

It localises to the cell membrane. It is found in the membrane. The catalysed reaction is [(1-&gt;4)-N-acetyl-beta-D-glucosaminyl](n) + UDP-N-acetyl-alpha-D-glucosamine = [(1-&gt;4)-N-acetyl-beta-D-glucosaminyl](n+1) + UDP + H(+). Its function is as follows. Polymerizes chitin, a structural polymer of the cell wall and septum, by transferring the sugar moiety of UDP-GlcNAc to the non-reducing end of the growing chitin polymer. CHS5 is required for the sustained growth at 37 degrees Celsius and is of critical importance for virulence. Especially important at infection temperatures for maintaining the cell wall integrity of developing yeast buds, elongating tips of hyphae, and random sites of expansion in sclerotic forms. This chain is Chitin synthase 5, found in Exophiala dermatitidis (Black yeast-like fungus).